Reading from the N-terminus, the 164-residue chain is Lipoprotein signal peptidase (164 aa).

3 helical membrane passes run 12 to 32 (WLWLVVVVLIIDLGSKYLILQ), 70 to 90 (WFFAGIAIGISVILAVMMYRL), and 102 to 122 (ALIIGGALGNLFDRLWHGFVV). Residues Asp123 and Asp141 contribute to the active site. Residues 137 to 157 (FNLADTAICVGAALIVLEGFL) traverse the membrane as a helical segment.

The protein belongs to the peptidase A8 family.

Its subcellular location is the cell inner membrane. It carries out the reaction Release of signal peptides from bacterial membrane prolipoproteins. Hydrolyzes -Xaa-Yaa-Zaa-|-(S,diacylglyceryl)Cys-, in which Xaa is hydrophobic (preferably Leu), and Yaa (Ala or Ser) and Zaa (Gly or Ala) have small, neutral side chains.. The protein operates within protein modification; lipoprotein biosynthesis (signal peptide cleavage). Functionally, this protein specifically catalyzes the removal of signal peptides from prolipoproteins. This chain is Lipoprotein signal peptidase, found in Shigella boydii serotype 4 (strain Sb227).